A 66-amino-acid chain; its full sequence is uncharacterized protein (66 aa).

Positions 1-25 (MIVIILLFISIIVFLSVIQPQPSKN) are cleaved as a signal peptide. Residues 21–31 (QPSKNKSRQQA) show a composition bias toward polar residues. Residues 21 to 66 (QPSKNKSRQQADSGYFGYSDHSSHHDGCSSDGGFSDSGCGGGGGGD) are disordered.

This is an uncharacterized protein from Bacillus subtilis (strain 168).